The sequence spans 220 residues: Adenylate kinase (220 aa).

Residue G12–T17 participates in ATP binding. Residues S32 to V62 are NMP. Residues T33, R38, E60–V62, G88–R91, and Q95 contribute to the AMP site. An LID region spans residues A129 to D166. R130 provides a ligand contact to ATP. Zn(2+)-binding residues include C133 and C136. I139–Y140 is an ATP binding site. Zn(2+)-binding residues include C153 and C156. AMP-binding residues include R163 and R174. Position 202 (I202) interacts with ATP.

It belongs to the adenylate kinase family. In terms of assembly, monomer.

It localises to the cytoplasm. It carries out the reaction AMP + ATP = 2 ADP. The protein operates within purine metabolism; AMP biosynthesis via salvage pathway; AMP from ADP: step 1/1. Functionally, catalyzes the reversible transfer of the terminal phosphate group between ATP and AMP. Plays an important role in cellular energy homeostasis and in adenine nucleotide metabolism. The chain is Adenylate kinase from Thermotoga maritima (strain ATCC 43589 / DSM 3109 / JCM 10099 / NBRC 100826 / MSB8).